A 504-amino-acid polypeptide reads, in one-letter code: Probable ergothioneine transporter EgtUBC (504 aa).

The ABC transmembrane type-1 domain maps to 19-198 (MIEHIQISFI…LLAIIFDLIL (180 aa)). The next 6 helical transmembrane spans lie at 25–45 (ISFIALLIATAIAVPLGILLT), 49–69 (TISEIVMNIAAILQTIPSLAL), 70–90 (LGLMIPLFGIGRVPAIIALVV), 145–165 (AMVLIIGTATLAALIGAGGLG), 178–198 (SLILLGAIPAALLAIIFDLIL), and 209–229 (LLMTLGVIVMIIILAIAIPMF). The tract at residues 231-504 (QKGDKITLAG…DYLKAKGLIK (274 aa)) is ergothioneine binding domain.

In the N-terminal section; belongs to the binding-protein-dependent transport system permease family. The protein in the C-terminal section; belongs to the OsmX family. The complex is probably composed of at least an ATP-binding protein (EgtUA) and a transmembrane protein (EgtUBC).

It localises to the membrane. In terms of biological role, part of an ABC transporter complex EgtU required for the uptake of ergothioneine (EGT), a natural low-molecular weight (LMW) thiol antioxidant. Responsible for the translocation of the substrate across the membrane. Also contains a C-terminal periplasmic solute-binding domain (SBD) which binds to EGT with sub-micromolar affinity. Probably does not bind L-hercynine. In Staphylococcus aureus (strain USA300), this protein is Probable ergothioneine transporter EgtUBC (egtUBC).